The sequence spans 291 residues: tRNA U34 carboxymethyltransferase (291 aa).

Residues lysine 61, tryptophan 75, lysine 80, glycine 100, 122-124 (DPS), 149-150 (VE), tyrosine 169, and arginine 284 contribute to the carboxy-S-adenosyl-L-methionine site.

Belongs to the class I-like SAM-binding methyltransferase superfamily. CmoB family. As to quaternary structure, homotetramer.

It carries out the reaction carboxy-S-adenosyl-L-methionine + 5-hydroxyuridine(34) in tRNA = 5-carboxymethoxyuridine(34) in tRNA + S-adenosyl-L-homocysteine + H(+). Catalyzes carboxymethyl transfer from carboxy-S-adenosyl-L-methionine (Cx-SAM) to 5-hydroxyuridine (ho5U) to form 5-carboxymethoxyuridine (cmo5U) at position 34 in tRNAs. The sequence is that of tRNA U34 carboxymethyltransferase from Campylobacter jejuni subsp. jejuni serotype O:23/36 (strain 81-176).